Here is a 681-residue protein sequence, read N- to C-terminus: Rabphilin-3A (681 aa).

The disordered stretch occupies residues 1–21 (MTDTVVNRWMYPGDGPLQSND). The RabBD domain occupies 40-157 (QRKQEELTDE…KRSGAWFFKG (118 aa)). Residues 88–145 (GDGVNRCILCGEQLGMLGSACVVCEDCKKNVCTKCGVETSNNRPHPVWLCKICLEQRE) form an FYVE-type zinc finger. Residues C94, C97, C111, C114, C119, C122, C137, and C140 each contribute to the Zn(2+) site. Residues 162-375 (VLPQPMPIKK…EEEANSYDSD (214 aa)) form a disordered region. The span at 199–208 (ARGDMEDRRP) shows a compositional bias: basic and acidic residues. The residue at position 223 (R223) is an Omega-N-methylarginine. A compositionally biased stretch (basic and acidic residues) spans 243–252 (RDSEGWDHAH). S271 is subject to Phosphoserine. Residues 278-296 (APAPVPSPAPPQPVQPGPP) are compositionally biased toward pro residues. Positions 347-356 (AAPYSQAAPA) are enriched in low complexity. Residues 362-375 (AEEEEEEANSYDSD) are compositionally biased toward acidic residues. A C2 1 domain is found at 379–501 (TLGALEFSLL…KANQRKNFNI (123 aa)). Positions 409, 410, 416, 471, 472, 473, 479, 526, 568, 574, 628, 629, 630, and 636 each coordinate Ca(2+). Residues 537 to 670 (ERGKILVSLM…NKDKKIERWH (134 aa)) enclose the C2 2 domain. Phosphoserine occurs at positions 679 and 680.

In terms of assembly, interacts with RAB3B, RAB3C, RAB3D, RAB8A, RAB27A and RAB27B. Interacts with RAB3A; this interaction recruits RPH3A to synaptic vesicules. Interacts (via C2B domain) with SNAP25. Interacts with deubiquitinating enzyme CAND1; this interaction results in the deubiquitination of RPH3A. Interacts with GRIN2A and DLG4; this ternary complex regulates NMDA receptor composition at postsynaptic membranes. Interacts with SNCA. The cofactor is Ca(2+). Post-translationally, ubiquitinated. Deubiquitinated by CAND1 to prevent its degradation. In terms of tissue distribution, specifically expressed in brain.

The protein resides in the cytoplasmic vesicle. It localises to the secretory vesicle. It is found in the synaptic vesicle membrane. The protein localises to the cell projection. Its subcellular location is the dendritic spine. The protein resides in the postsynaptic cell membrane. It localises to the membrane. In terms of biological role, plays an essential role in docking and fusion steps of regulated exocytosis. At the presynaptic level, RPH3A is recruited by RAB3A to the synaptic vesicle membrane in a GTP-dependent manner where it modulates synaptic vesicle trafficking and calcium-triggered neurotransmitter release. In the post-synaptic compartment, forms a ternary complex with GRIN2A and DLG4 and regulates NMDA receptor stability. Also plays a role in the exocytosis of arginine vasopressin hormone. This Mus musculus (Mouse) protein is Rabphilin-3A (Rph3a).